The primary structure comprises 204 residues: DNA polymerase epsilon subunit D (204 aa).

A compositionally biased stretch (basic and acidic residues) spans 165–177; the sequence is KEVQRRRAEKTPA. The tract at residues 165-204 is disordered; it reads KEVQRRRAEKTPAADEGQAEEGDAADEEEGSHKRAKLDEH. A compositionally biased stretch (acidic residues) spans 181–193; sequence GQAEEGDAADEEE. The segment covering 194–204 has biased composition (basic and acidic residues); that stretch reads GSHKRAKLDEH.

In terms of assembly, heterotetramer. Consists of four subunits: POL2, DPB2, DPB3 and DPB4.

It is found in the nucleus. As accessory component of the DNA polymerase epsilon (DNA polymerase II) participates in chromosomal DNA replication. This is DNA polymerase epsilon subunit D (DPB4) from Eremothecium gossypii (strain ATCC 10895 / CBS 109.51 / FGSC 9923 / NRRL Y-1056) (Yeast).